The following is a 181-amino-acid chain: MPLTDSLRDDILAAVPSLRAFAISLSGNADRADDLVQETLLRALANIDSFQPGSNLPAWLFTILRNLFRSDYRKRRREVEDADGSYAKTLKSQPGQTAHLEFEEFRAALDKLPQDQREALILVGASGFSYEDAAAICGCAVGTIKSRVNRARSKLSALLYVDGAEDFGPDDTVRAVIGGNG.

The sigma-70 factor domain-2 stretch occupies residues 15–77 (VPSLRAFAIS…FRSDYRKRRR (63 aa)). Residues 103–155 (EEFRAALDKLPQDQREALILVGASGFSYEDAAAICGCAVGTIKSRVNRARSKL) form a sigma-70 factor domain-4 region.

It belongs to the sigma-70 factor family. ECF subfamily.

Functionally, sigma factors are initiation factors that promote the attachment of RNA polymerase to specific initiation sites and are then released. Regulates expression of hpnP under a variety of stresses, including high temperature, pH stress, and presence of nonionic osmolytes. In Rhodopseudomonas palustris (strain TIE-1), this protein is ECF RNA polymerase sigma factor EcfG.